Consider the following 2099-residue polypeptide: MATLPSAERRAFALKINRYSSAEIRKQFTLPPNLGQYHRQSISTSGFPSLQLPQFYDPVEPVDFEGLLMTHLNSLDVQLAQELGDFTDDDLDVVFTPKECRTLQPSLPEEGVELDPHVRDCVQTYIREWLIVNRKNQGSPEICGFKKTGSRKDFHKTLPKQTFESETLECSEPAAQAGPRHLNVLCDVSGKGPVTACDFDLRSLQPDKRLENLLQQVSAEDFEKQNEEARRTNRQAELFALYPSVDEEDAVEIRPVPECPKEHLGNRILVKLLTLKFEIEIEPLFASIALYDVKERKKISENFHCDLNSDQFKGFLRAHTPSVAASSQARSAVFSVTYPSSDIYLVVKIEKVLQQGEIGDCAEPYTVIKESDGGKSKEKIEKLKLQAESFCQRLGKYRMPFAWAPISLSSFFNVSTLEREVTDVDSVVGRSSVGERRTLAQSRRLSERALSLEENGVGSNFKTSTLSVSSFFKQEGDRLSDEDLFKFLADYKRSSSLQRRVKSIPGLLRLEISTAPEIINCCLTPEMLPVKPFPENRTRPHKEILEFPTREVYVPHTVYRNLLYVYPQRLNFVNKLASARNITIKIQFMCGEDASNAMPVIFGKSSGPEFLQEVYTAVTYHNKSPDFYEEVKIKLPAKLTVNHHLLFTFYHISCQQKQGASVETLLGYSWLPILLNERLQTGSYCLPVALEKLPPNYSMHSAEKVPLQNPPIKWAEGHKGVFNIEVQAVSSVHTQDNHLEKFFTLCHSLESQVTFPIRVLDQKISEMALEHELKLSIICLNSSRLEPLVLFLHLVLDKLFQLSVQPMVIAGQTANFSQFAFESVVAIANSLHNSKDLSKDQHGRNCLLASYVHYVFRLPEVQRDVPKSGAPTALLDPRSYHTYGRTSAAAVSSKLLQARVMSSSNPDLAGTHSAADEEVKNIMSSKIADRNCSRMSYYCSGSSDAPSSPAAPRPASKKHFHEELALQMVVSTGMVRETVFKYAWFFFELLVKSMAQHVHNMDKRDSFRRTRFSDRFMDDITTIVNVVTSEIAALLVKPQKENEQAEKMNISLAFFLYDLLSLMDRGFVFNLIRHYCSQLSAKLSNLPTLISMRLEFLRILCSHEHYLNLNLFFMNADTAPTSPCPSISSQNSSSCSSFQDQKIASMFDLTSEYRQQHFLTGLLFTELAAALDAEGEGISKVQRKAVSAIHSLLSSHDLDPRCVKPEVKVKIAALYLPLVGIILDALPQLCDFTVADTRRYRTSGSDEEQEGAGAINQNVALAIAGNNFNLKTSGIVLSSLPYKQYNMLNADTTRNLMICFLWIMKNADQSLIRKWIADLPSTQLNRILDLLFICVLCFEYKGKQSSDKVSTQVLQKSRDVKARLEEALLRGEGARGEMMRRRAPGNDRFPGLNENLRWKKEQTHWRQANEKLDKTKAELDQEALISGNLATEAHLIILDMQENIIQASSALDCKDSLLGGVLRVLVNSLNCDQSTTYLTHCFATLRALIAKFGDLLFEEEVEQCFDLCHQVLHHCSSSMDVTRSQACATLYLLMRFSFGATSNFARVKMQVTMSLASLVGRAPDFNEEHLRRSLRTILAYSEEDTAMQMTPFPTQVEELLCNLNSILYDTVKMREFQEDPEMLMDLMYRIAKSYQASPDLRLTWLQNMAEKHTKKKCYTEAAMCLVHAAALVAEYLSMLEDHSYLPVGSVSFQNISSNVLEESVVSEDTLSPDEDGVCAGQYFTESGLVGLLEQAAELFSTGGLYETVNEVYKLVIPILEAHREFRKLTLTHSKLQRAFDSIVNKDHKRMFGTYFRVGFFGSKFGDLDEQEFVYKEPAITKLPEISHRLEAFYGQCFGAEFVEVIKDSTPVDKTKLDPNKAYIQITFVEPYFDEYEMKDRVTYFEKNFNLRRFMYTTPFTLEGRPRGELHEQYRRNTVLTTMHAFPYIKTRISVIQKEEFVLTPIEVAIEDMKKKTLQLAVAINQEPPDAKMLQMVLQGSVGATVNQGPLEVAQVFLAEIPADPKLYRHHNKLRLCFKEFIMRCGEAVEKNKRLITADQREYQQELKKNYNKLKENLRPMIERKIPELYKPIFRVESQKRDSFHRSSFRKCETQLSQGS.

A phosphoserine mark is found at S20, S139, and S451. In terms of domain architecture, C2 DOCK-type spans 560-729 (RNLLYVYPQR…GVFNIEVQAV (170 aa)). 4 positions are modified to phosphoserine: S904, S936, S1145, and S1243. A DOCKER domain is found at 1632–2066 (KSYQASPDLR…LRPMIERKIP (435 aa)). Position 2087 is a phosphoserine (S2087).

The protein belongs to the DOCK family. As to quaternary structure, interacts (via DOCKER domain) with GTPase CDC42; the interaction activates CDC42 by exchanging GDP for GTP. The unphosphorylated form interacts (via DOCKER domain) with LRCH1 (via LRR repeats); the interaction prevents the association between DOCK8 and CDC42. Interacts with CCDC88B. In terms of processing, in response to chemokine CXCL12/SDF-1-alpha stimulation, phosphorylated by PRKCA/PKC-alpha which promotes DOCK8 dissociation from LRCH1. As to expression, expressed in peripheral blood mononuclear cells (PBMCs).

Its subcellular location is the cytoplasm. It is found in the cell membrane. The protein localises to the cell projection. It localises to the lamellipodium membrane. Functionally, guanine nucleotide exchange factor (GEF) which specifically activates small GTPase CDC42 by exchanging bound GDP for free GTP. During immune responses, required for interstitial dendritic cell (DC) migration by locally activating CDC42 at the leading edge membrane of DC. Required for CD4(+) T-cell migration in response to chemokine stimulation by promoting CDC42 activation at T cell leading edge membrane. Is involved in NK cell cytotoxicity by controlling polarization of microtubule-organizing center (MTOC), and possibly regulating CCDC88B-mediated lytic granule transport to MTOC during cell killing. The protein is Dedicator of cytokinesis protein 8 (DOCK8) of Homo sapiens (Human).